A 1357-amino-acid chain; its full sequence is Vascular endothelial growth factor receptor 3 (1357 aa).

The first 24 residues, 1–24 (MKRDFTFFCRIWIGIPFFSGLVNG), serve as a signal peptide directing secretion. 7 consecutive Ig-like C2-type domains span residues 25 to 121 (FSMS…YYRC), 138 to 244 (IFVF…VQVI), 255 to 343 (PEDS…RELT), 352 to 442 (PFIS…LNFT), 453 to 583 (EKEA…TTIP), 583 to 690 (PEGF…HRKY), and 699 to 785 (PRYR…ATVS). At 25–796 (FSMSPPTLDN…IGSDDKTNVE (772 aa)) the chain is on the extracellular side. 5 N-linked (GlcNAc...) asparagine glycosylation sites follow: Asn44, Asn48, Asn114, Asn216, and Asn271. Disulfide bonds link Cys51/Cys121 and Cys173/Cys225. The cysteines at positions 272 and 331 are disulfide-linked. N-linked (GlcNAc...) asparagine glycans are attached at residues Asn360, Asn400, and Asn440. 3 disulfide bridges follow: Cys473-Cys562, Cys493-Cys514, and Cys606-Cys674. Asn553, Asn610, Asn660, Asn707, Asn711, and Asn751 each carry an N-linked (GlcNAc...) asparagine glycan. Cys720 and Cys772 form a disulfide bridge. The helical transmembrane segment at 797–817 (IVILIGTGVIAIFFWVLLLVI) threads the bilayer. Over 818-1357 (FCNVKRVNPA…DYFSSSDQAV (540 aa)) the chain is Cytoplasmic. Positions 866-1181 (LRLGKVLGHG…ALVEILGDLL (316 aa)) constitute a Protein kinase domain. ATP is bound by residues 872-880 (LGHGAFGKV) and Lys900. The tract at residues 978 to 1007 (QSQVRRMIEAGQASQSEHQPSTSSTNPPRV) is disordered. Residues 989–1005 (QASQSEHQPSTSSTNPP) show a composition bias toward polar residues. Asp1045 functions as the Proton acceptor in the catalytic mechanism. Phosphotyrosine; by autocatalysis occurs at positions 1071 and 1076. Residues 1192–1212 (NVSQSSEDDGFSQASSRPPSQ) form a disordered region. Phosphotyrosine; by autocatalysis occurs at positions 1226, 1227, 1334, and 1338.

This sequence belongs to the protein kinase superfamily. Tyr protein kinase family. CSF-1/PDGF receptor subfamily. In terms of assembly, interacts with vegfc and vegfd. Monomer in the absence of bound vegfc or vegfd. Homodimer in the presence of bound vegfc or vegfd. Post-translationally, autophosphorylated on tyrosine residues upon ligand binding. Autophosphorylation occurs in trans, i.e. one subunit of the dimeric receptor phosphorylates tyrosine residues on the other subunit.

It localises to the cell membrane. The protein resides in the cytoplasm. Its subcellular location is the nucleus. It catalyses the reaction L-tyrosyl-[protein] + ATP = O-phospho-L-tyrosyl-[protein] + ADP + H(+). Present in an inactive conformation in the absence of bound ligand. Binding of vegfc or vegfd leads to dimerization and activation by autophosphorylation on tyrosine residues. Tyrosine-protein kinase that acts as a cell-surface receptor for vegf or vegfc. Combinations of multiple VEGF receptors are required for development of different blood vessel types in the embryo. Involved in angiogenesis, specifically in VEGF-induced sprouting of new blood vessels, but not required for proper vasculogenesis or hematopoiesis. The polypeptide is Vascular endothelial growth factor receptor 3 (flt4) (Danio rerio (Zebrafish)).